The primary structure comprises 445 residues: MSRDPTGVGARWAIMIVSLGVTASSFLFINGVAFLIPRLENARGTPLSHAGLLASMPSWGLVVTMFAWGYLLDHVGERMVMAVGSALTAAAAYAAASVHSLLWIGVFLFLGGMAAGGCNSAGGRLVSGWFPPQQRGLAMGIRQTAQPLGIASGALVIPELAERGVHAGLMFPAVVCTLAAVASVLGIVDPPRKSRTKASEQELASPYRGSSILWRIHAASALLMMPQTVTVTFMLVWLINHHGWSVAQAGVLVTISQLLGALGRVAVGRWSDHVGSRMRPVRLIAAAAAATLFLLAAVDNEGSRYDVLLMIAISVIAVLDNGLEAAAITEYAGPYWSGRALGIQNTTQRLMAAAGPPLFGSLITTAAYPTAWALCGVFPLAAVPLVPVRLLPPGLETRARRQSVRRHRWWQAVRCHAWPNGPRRPGPPGQPRRVRQGGTAITPPT.

8 helical membrane-spanning segments follow: residues 16-36, 52-72, 98-118, 168-188, 219-239, 243-263, 283-303, and 366-386; these read IVSLGVTASSFLFINGVAFLI, LLASMPSWGLVVTMFAWGYLL, VHSLLWIGVFLFLGGMAAGGC, GLMFPAVVCTLAAVASVLGIV, ASALLMMPQTVTVTFMLVWLI, GWSVAQAGVLVTISQLLGALG, LIAAAAAATLFLLAAVDNEGS, and AAYPTAWALCGVFPLAAVPLV. A disordered region spans residues 417–445; that stretch reads AWPNGPRRPGPPGQPRRVRQGGTAITPPT.

Belongs to the major facilitator superfamily.

It localises to the cell membrane. This is an uncharacterized protein from Mycobacterium tuberculosis (strain CDC 1551 / Oshkosh).